The following is a 256-amino-acid chain: Phosphoribosylaminoimidazole-succinocarboxamide synthase (256 aa).

This sequence belongs to the SAICAR synthetase family.

The enzyme catalyses 5-amino-1-(5-phospho-D-ribosyl)imidazole-4-carboxylate + L-aspartate + ATP = (2S)-2-[5-amino-1-(5-phospho-beta-D-ribosyl)imidazole-4-carboxamido]succinate + ADP + phosphate + 2 H(+). It participates in purine metabolism; IMP biosynthesis via de novo pathway; 5-amino-1-(5-phospho-D-ribosyl)imidazole-4-carboxamide from 5-amino-1-(5-phospho-D-ribosyl)imidazole-4-carboxylate: step 1/2. This chain is Phosphoribosylaminoimidazole-succinocarboxamide synthase, found in Synechococcus sp. (strain JA-3-3Ab) (Cyanobacteria bacterium Yellowstone A-Prime).